The primary structure comprises 312 residues: Protein-glutamate methylesterase/protein-glutamine glutaminase (312 aa).

The Response regulatory domain maps to 5–122 (RVLSVDDSAL…REGMLAYSEM (118 aa)). D56 carries the 4-aspartylphosphate modification. One can recognise a CheB-type methylesterase domain in the interval 152–307 (LLSSEKLIAI…QQMLAKISAG (156 aa)). Residues S164, H190, and D249 contribute to the active site.

The protein belongs to the CheB family. Post-translationally, phosphorylated by CheA. Phosphorylation of the N-terminal regulatory domain activates the methylesterase activity.

It is found in the cytoplasm. The catalysed reaction is [protein]-L-glutamate 5-O-methyl ester + H2O = L-glutamyl-[protein] + methanol + H(+). It carries out the reaction L-glutaminyl-[protein] + H2O = L-glutamyl-[protein] + NH4(+). Involved in chemotaxis. Part of a chemotaxis signal transduction system that modulates chemotaxis in response to various stimuli. Catalyzes the demethylation of specific methylglutamate residues introduced into the chemoreceptors (methyl-accepting chemotaxis proteins or MCP) by CheR. Also mediates the irreversible deamidation of specific glutamine residues to glutamic acid. In Shigella boydii serotype 4 (strain Sb227), this protein is Protein-glutamate methylesterase/protein-glutamine glutaminase.